The following is a 268-amino-acid chain: Large ribosomal subunit protein uL3 (268 aa).

An N5-methylglutamine modification is found at Q156. Over residues 242–259 the composition is skewed to low complexity; that stretch reads VENEAAPADADNAAPEAA. A disordered region spans residues 242–268; the sequence is VENEAAPADADNAAPEAAADGEEGTQA.

It belongs to the universal ribosomal protein uL3 family. Part of the 50S ribosomal subunit. Forms a cluster with proteins L14 and L19. Post-translationally, methylated by PrmB.

Its function is as follows. One of the primary rRNA binding proteins, it binds directly near the 3'-end of the 23S rRNA, where it nucleates assembly of the 50S subunit. This chain is Large ribosomal subunit protein uL3, found in Maricaulis maris (strain MCS10) (Caulobacter maris).